Reading from the N-terminus, the 490-residue chain is uncharacterized protein (490 aa).

The segment covering 370–385 has biased composition (low complexity); the sequence is FSMKRPSSSSSSLSGS. The segment at 370 to 406 is disordered; sequence FSMKRPSSSSSSLSGSWHGDTENSVKQSLASPSEASL. The segment covering 391–406 has biased composition (polar residues); the sequence is ENSVKQSLASPSEASL.

Its subcellular location is the cytoplasm. The protein resides in the nucleus. This is an uncharacterized protein from Schizosaccharomyces pombe (strain 972 / ATCC 24843) (Fission yeast).